The chain runs to 343 residues: Anthranilate phosphoribosyltransferase (343 aa).

Residues glycine 83, 86–87, threonine 91, 93–96, 111–119, and serine 123 each bind 5-phospho-alpha-D-ribose 1-diphosphate; these read GD, NIST, and KHGGRSVSS. Glycine 83 contacts anthranilate. Residue serine 95 participates in Mg(2+) binding. Position 169 (arginine 169) interacts with anthranilate. 2 residues coordinate Mg(2+): aspartate 228 and glutamate 229.

It belongs to the anthranilate phosphoribosyltransferase family. As to quaternary structure, homodimer. Mg(2+) serves as cofactor.

The catalysed reaction is N-(5-phospho-beta-D-ribosyl)anthranilate + diphosphate = 5-phospho-alpha-D-ribose 1-diphosphate + anthranilate. The protein operates within amino-acid biosynthesis; L-tryptophan biosynthesis; L-tryptophan from chorismate: step 2/5. Functionally, catalyzes the transfer of the phosphoribosyl group of 5-phosphorylribose-1-pyrophosphate (PRPP) to anthranilate to yield N-(5'-phosphoribosyl)-anthranilate (PRA). The protein is Anthranilate phosphoribosyltransferase of Thiobacillus denitrificans (strain ATCC 25259 / T1).